The following is a 273-amino-acid chain: Type II methyltransferase M2.MboI (273 aa).

Belongs to the N(4)/N(6)-methyltransferase family.

The enzyme catalyses a 2'-deoxyadenosine in DNA + S-adenosyl-L-methionine = an N(6)-methyl-2'-deoxyadenosine in DNA + S-adenosyl-L-homocysteine + H(+). Its function is as follows. A beta subtype methylase that recognizes the double-stranded sequence 5'-GATC-3', methylates A-2 on both strands, and protects the DNA from cleavage by the MboI endonuclease. This seems to be a weaker methylase than M1.MboI. The protein is Type II methyltransferase M2.MboI (mboIBM) of Moraxella bovis.